The chain runs to 346 residues: MGVTELGKLIGKEARREIKLESLAGKCVALDAYNALYQFLASIRQPDGTPLMDRAGRITSHLSGLFYRTINLLEAGVKPVYVFDGKPPEFKLLEIEQRKKAKEKALEEVEKAIREGRREDVAKYAKRAIFLTSEMVEDAKKLLTYMGIPWVQAPSEGEAQAAHMAKRGHCWAVGSQDYDSLLFGSPRLVRNLAVSPKRKVGEEVVELSPELIELDAVLKSLKLKGREQLIDLAILLGTDYNPEGVPGVGPQKALKLIWEFGSLEKLLQTVLKGVQFPVDPLKIREFFLNPPVTDQYSTELSTPDERKIVELLVEEHDFSQERVAKALERLAKARGKVKTTSLDAFF.

An N-domain region spans residues 1 to 102 (MGVTELGKLI…LEIEQRKKAK (102 aa)). Mg(2+) is bound by residues Asp-31, Asp-84, Glu-156, Glu-158, Asp-177, Asp-179, and Asp-239. The I-domain stretch occupies residues 120-261 (DVAKYAKRAI…KALKLIWEFG (142 aa)).

It belongs to the XPG/RAD2 endonuclease family. FEN1 subfamily. In terms of assembly, interacts with PCNA. PCNA stimulates the nuclease activity without altering cleavage specificity. The cofactor is Mg(2+).

Functionally, structure-specific nuclease with 5'-flap endonuclease and 5'-3' exonuclease activities involved in DNA replication and repair. During DNA replication, cleaves the 5'-overhanging flap structure that is generated by displacement synthesis when DNA polymerase encounters the 5'-end of a downstream Okazaki fragment. Binds the unpaired 3'-DNA end and kinks the DNA to facilitate 5' cleavage specificity. Cleaves one nucleotide into the double-stranded DNA from the junction in flap DNA, leaving a nick for ligation. Also involved in the base excision repair (BER) pathway. Acts as a genome stabilization factor that prevents flaps from equilibrating into structures that lead to duplications and deletions. Also possesses 5'-3' exonuclease activity on nicked or gapped double-stranded DNA. This chain is Flap endonuclease 1, found in Pyrobaculum calidifontis (strain DSM 21063 / JCM 11548 / VA1).